The chain runs to 392 residues: Na(+)/H(+) antiporter NhaA (392 aa).

11 helical membrane passes run 16 to 36 (ILLIIVTVLALILQNSFLSAA), 58 to 78 (LLLWVNDGLMAIFFFLIGLEV), 93 to 113 (ITLPGIAAVGGMIVPALIFIL), 124 to 144 (GWAIPTATDIAFALGILSLLG), 153 to 173 (IFLMALSIIDDLGAIVIIALF), 176 to 196 (TDLSTLSITVAAISLAILFIM), 199 to 219 (MDVAIKSAYIVIGIILWVSVL), 257 to 277 (DLHYWVAFLILPLFAFVNAGV), 295 to 315 (VMLGLFVGKQAGVFGFSWLAI), 328 to 348 (WMMLYGVSVLTGIGFTMSLFV), and 362 to 382 (ADKLAILLGSFLSAATGYLIL).

Belongs to the NhaA Na(+)/H(+) (TC 2.A.33) antiporter family.

It localises to the cell inner membrane. It catalyses the reaction Na(+)(in) + 2 H(+)(out) = Na(+)(out) + 2 H(+)(in). Functionally, na(+)/H(+) antiporter that extrudes sodium in exchange for external protons. This is Na(+)/H(+) antiporter NhaA from Sulfurovum sp. (strain NBC37-1).